The chain runs to 443 residues: D-lactate dehydrogenase (443 aa).

Residues 1-182 lie on the Extracellular side of the membrane; it reads MSWIDELSKI…GGKTIKNSSG (182 aa). An FAD-binding PCMH-type domain is found at 32–209; the sequence is RAAENFVVVK…TKATIRLFPQ (178 aa). The chain crosses the membrane as a helical span at residues 183 to 203; that stretch reads YSLLHLLVGSEGTLAVITKAT. At 204 to 383 the chain is on the cytoplasmic side; the sequence is IRLFPQMRDM…WEKSYFEFRK (180 aa). A helical membrane pass occupies residues 384 to 404; that stretch reads SLLSLAVSLGGVISGEHGIGA. At 405-443 the chain is on the extracellular side; sequence VKLSELEELFPEQFELMRQIKLLFDPKNILNPGKVVRKL.

It belongs to the FAD-binding oxidoreductase/transferase type 4 family. FAD is required as a cofactor. Zn(2+) serves as cofactor.

The protein resides in the cell membrane. The catalysed reaction is (R)-lactate + A = pyruvate + AH2. In terms of biological role, catalyzes the dehydrogenation of (R)-lactate (D-lactate) to pyruvate. Is likely involved in the utilization of D-lactate as a sole source for both carbon and electrons for dissimilatory sulfate reduction. Cannot use L-lactate as substrate, and NAD(+), horse cytochrome c, methylene blue or dimethylnaphthoquinone as acceptors. Active in vitro with artificial electron acceptors such as 2,6-dichlorophenolindophenol (DCPIP); the physiological acceptor is not known, but potential acceptors include cytochromes or quinones. In Archaeoglobus fulgidus (strain ATCC 49558 / DSM 4304 / JCM 9628 / NBRC 100126 / VC-16), this protein is D-lactate dehydrogenase.